The primary structure comprises 635 residues: Isethionate TRAP transporter permease protein DctMQ (635 aa).

16 helical membrane-spanning segments follow: residues 38–58, 75–95, 117–137, 154–174, 192–212, 217–237, 266–286, 299–319, 350–370, 379–399, 431–451, 453–473, 481–501, 526–546, 572–592, and 609–629; these read KPFL…QTLY, TEEM…PVAI, ISWI…LWQS, LQLP…LMAV, TVIG…ADYI, VLFG…IGLG, FPIM…AGGL, GALP…FAAI, AIVA…PFVV, IGKL…ALMA, WALM…MTPT, AAAL…RELS, VVEA…ATIF, IAIL…MEAL, IIMV…VNLF, and VLPL…VPAI.

In the N-terminal section; belongs to the TRAP transporter small permease family. It in the C-terminal section; belongs to the TRAP transporter large permease family. As to quaternary structure, the complex comprises the periplasmic solute receptor protein DctP, and the fused transmembrane protein DctMQ.

It localises to the cell inner membrane. Its pathway is organosulfur degradation; alkanesulfonate degradation. Part of the tripartite ATP-independent periplasmic (TRAP) transport system DctPQM involved in the uptake of isethionate (2-hydroxyethanesulfonate), which is then catabolized by enzymes encoded by adjacent genes in the locus. Thereby is involved in an anaerobic respiration pathway that converts the sulfonate isethionate to ammonia, acetate and sulfide. This chain is Isethionate TRAP transporter permease protein DctMQ, found in Oleidesulfovibrio alaskensis (strain ATCC BAA-1058 / DSM 17464 / G20) (Desulfovibrio alaskensis).